Here is a 31-residue protein sequence, read N- to C-terminus: Cyclotide mden-N (31 aa).

Positions 1–31 form a cross-link, cyclopeptide (Gly-Asn); it reads GTIPCGESCVYIPCLTSALGCSCKNKVCYRN. 3 disulfide bridges follow: C5–C21, C9–C23, and C14–C28.

This sequence belongs to the cyclotide family. Bracelet subfamily. Post-translationally, this is a cyclic peptide.

Functionally, probably participates in a plant defense mechanism. The protein is Cyclotide mden-N of Melicytus dentatus (Tree violet).